Here is a 57-residue protein sequence, read N- to C-terminus: Mambaquaretin-7 (57 aa).

The 51-residue stretch at 5 to 55 (CELIVAAGPCMFFISAFYYSKGANKCYPFTYSGCRGNANRFKTIEECRRTC) folds into the BPTI/Kunitz inhibitor domain. 3 disulfide bridges follow: Cys5–Cys55, Cys14–Cys38, and Cys30–Cys51.

It belongs to the venom Kunitz-type family. In terms of tissue distribution, expressed by the venom gland.

The protein localises to the secreted. Functionally, the mixture of mambaquaretin-7 and mambaquaretin-8 interacts with vasopressin V2 receptor (V2R/AVPR2), probably in a selective manner. This mixture inhibits vasopressin binding human V2R in the nanomolar range (Ki=3.14 nM), and also potently inhibits vasopressin-induced cAMP production (IC(50)=58 nM). In vivo, intraperitoneal injection of this protein into rats increases diuresis, without any loss of electrolytes. The sequence is that of Mambaquaretin-7 from Dendroaspis polylepis polylepis (Black mamba).